A 512-amino-acid chain; its full sequence is Tabersonine 16-hydroxylase 2 (512 aa).

A topological domain (lumenal) is located at residue M1. Residues 2 to 22 form a helical membrane-spanning segment; that stretch reads ELYYFSTFAFLLFCFILAKTL. The Cytoplasmic segment spans residues 23 to 512; sequence KKSGQSNLKL…YSASSLKGKY (490 aa). C445 serves as a coordination point for heme.

The protein belongs to the cytochrome P450 family. Heme serves as cofactor. Expressed at low levels in roots, fruits, stems, flower buds and flowers, but highly expressed in young leaves. Detected in adaxial and abaxial epidermis cells.

It is found in the endoplasmic reticulum membrane. It catalyses the reaction (-)-tabersonine + reduced [NADPH--hemoprotein reductase] + O2 = 16-hydroxytabersonine + oxidized [NADPH--hemoprotein reductase] + H2O + H(+). Involved in the foliar biosynthesis of vindoline, a precursor of vinblastine and vincristine. Hydroxylates specifically tabersonine, 2,3-dihydrotabersonine and 2,3-dihydro-3-hydroxytabersonine, but has no activity with naringenin, tryptamine, secologanin, strictosidine, ajmalicine, vindoline and catharanthine. The protein is Tabersonine 16-hydroxylase 2 of Catharanthus roseus (Madagascar periwinkle).